The following is a 112-amino-acid chain: Glutaredoxin-C6 (112 aa).

Residues 3–103 enclose the Glutaredoxin domain; that stretch reads LAKAKETVAS…PLLTEAGAIA (101 aa). Cysteine 23 and cysteine 26 form a disulfide bridge.

Belongs to the glutaredoxin family. CPYC subfamily. The N-terminus is blocked. As to expression, expressed in aleurone layer.

The protein resides in the cytoplasm. In terms of biological role, has a glutathione-disulfide oxidoreductase activity in the presence of NADPH and glutathione reductase. Reduces low molecular weight disulfides and proteins. Possesses thioltransferase, dehydroascorbate reductase and GSH-dependent peroxidase activities in vitro. The polypeptide is Glutaredoxin-C6 (GRXC6) (Oryza sativa subsp. japonica (Rice)).